Here is a 522-residue protein sequence, read N- to C-terminus: AAA ATPase forming ring-shaped complexes (522 aa).

Residues 1–26 (MGQEKHTDAASQSRDPEAVAAHENDQ) form a disordered region. A coiled-coil region spans residues 20-57 (AAHENDQLRQRNHALAKALTRATEELRKAKAQLEQFMA). 248–253 (GNGKTL) is an ATP binding site.

The protein belongs to the AAA ATPase family. As to quaternary structure, homohexamer. Assembles into a hexameric ring structure.

The polypeptide is AAA ATPase forming ring-shaped complexes (Bifidobacterium animalis subsp. lactis (strain AD011)).